The sequence spans 356 residues: Delta(7)-sterol 5(6)-desaturase (356 aa).

A run of 3 helical transmembrane segments spans residues 87–107 (LTLYLITWLFGVCVYYLFAGL), 134–154 (QANIAFPIMAIFTVPWFLAEV), and 171–191 (WYDYLQIPFFIAFTDLCIYWI). The Fatty acid hydroxylase domain occupies 179–303 (FFIAFTDLCI…FTTLWDRLGG (125 aa)). The Histidine box-1 motif lies at 192 to 196 (HRGLH). Residues 205 to 209 (HKPHH) carry the Histidine box-2 motif. Residues 235–255 (YIFPFLFPLSKIASVAFFVFV) form a helical membrane-spanning segment. The short motif at 280 to 284 (HTMHH) is the Histidine box-3 element.

Belongs to the sterol desaturase family. Fe cation serves as cofactor.

It localises to the endoplasmic reticulum membrane. The catalysed reaction is a Delta(7)-sterol + 2 Fe(II)-[cytochrome b5] + O2 + 2 H(+) = a Delta(5),Delta(7)-sterol + 2 Fe(III)-[cytochrome b5] + 2 H2O. It functions in the pathway steroid metabolism; ergosterol biosynthesis; ergosterol from zymosterol: step 3/5. Its function is as follows. Catalyzes the introduction of a C-5 double bond in the B ring of ergosterol. May contribute to the regulation of ergosterol biosynthesis. In Leptosphaeria maculans (Blackleg fungus), this protein is Delta(7)-sterol 5(6)-desaturase (ERG3).